The sequence spans 336 residues: Uroporphyrinogen decarboxylase (336 aa).

Substrate contacts are provided by residues 24–28 (RQVGR), Asp-73, Tyr-142, Ser-197, and His-312.

It belongs to the uroporphyrinogen decarboxylase family. In terms of assembly, homodimer.

Its subcellular location is the cytoplasm. The enzyme catalyses uroporphyrinogen III + 4 H(+) = coproporphyrinogen III + 4 CO2. It functions in the pathway porphyrin-containing compound metabolism; protoporphyrin-IX biosynthesis; coproporphyrinogen-III from 5-aminolevulinate: step 4/4. Functionally, catalyzes the decarboxylation of four acetate groups of uroporphyrinogen-III to yield coproporphyrinogen-III. This is Uroporphyrinogen decarboxylase from Chlamydia trachomatis serovar L2 (strain ATCC VR-902B / DSM 19102 / 434/Bu).